Here is a 112-residue protein sequence, read N- to C-terminus: Protein ECM19 (112 aa).

The helical transmembrane segment at 35-57 threads the bilayer; the sequence is NTLDMVTIGIACLVGVYTGTRFF. A disordered region spans residues 82–112; the sequence is EDGNLLKVTPSLSSTPAAPPTPPTPPTPPQQ. A compositionally biased stretch (pro residues) spans 98 to 112; sequence AAPPTPPTPPTPPQQ.

It is found in the mitochondrion membrane. May be involved in cell wall organization and biogenesis. In Saccharomyces cerevisiae (strain ATCC 204508 / S288c) (Baker's yeast), this protein is Protein ECM19 (ECM19).